An 85-amino-acid polypeptide reads, in one-letter code: Toxin TdNa8 (85 aa).

The signal sequence occupies residues 1-19; sequence MNYLTLIAAASLLTAGTES. The LCN-type CS-alpha/beta domain maps to 21-81; it reads KDGYPVKEGD…AAIKGYGRCR (61 aa). 4 disulfide bridges follow: Cys31–Cys80, Cys35–Cys56, Cys42–Cys63, and Cys46–Cys65. Proline amide is present on Pro82.

The protein belongs to the long (4 C-C) scorpion toxin superfamily. Sodium channel inhibitor family. Alpha subfamily. Expressed by the venom gland.

Its subcellular location is the secreted. Alpha toxins bind voltage-independently at site-3 of sodium channels (Nav) and inhibit the inactivation of the activated channels, thereby blocking neuronal transmission. In Tityus discrepans (Venezuelan scorpion), this protein is Toxin TdNa8.